Consider the following 619-residue polypeptide: ATP-dependent zinc metalloprotease FtsH (619 aa).

Over 1 to 5 the chain is Cytoplasmic; the sequence is MKYFK. Residues 6–26 traverse the membrane as a helical segment; sequence GISFYIIIFILILVIITFFTA. The Extracellular segment spans residues 27-110; it reads TDNPPKMSYS…VTQPPQPPWW (84 aa). The helical transmembrane segment at 111–131 threads the bilayer; the sequence is VSMLPTVGLVIILILIWFFFI. The Cytoplasmic segment spans residues 132–619; sequence QQSQGGGGGN…GSSQTPQLEG (488 aa). 204–211 lines the ATP pocket; that stretch reads GPPGTGKT. His426 lines the Zn(2+) pocket. The active site involves Glu427. 2 residues coordinate Zn(2+): His430 and Asp502.

The protein in the central section; belongs to the AAA ATPase family. This sequence in the C-terminal section; belongs to the peptidase M41 family. As to quaternary structure, homohexamer. Requires Zn(2+) as cofactor.

The protein resides in the cell membrane. Functionally, acts as a processive, ATP-dependent zinc metallopeptidase for both cytoplasmic and membrane proteins. Plays a role in the quality control of integral membrane proteins. The sequence is that of ATP-dependent zinc metalloprotease FtsH from Ruminiclostridium cellulolyticum (strain ATCC 35319 / DSM 5812 / JCM 6584 / H10) (Clostridium cellulolyticum).